The primary structure comprises 679 residues: DNA-directed RNA polymerase subunit beta' (679 aa).

Zn(2+)-binding residues include Cys-69, Cys-71, Cys-87, and Cys-90. The Mg(2+) site is built by Asp-489, Asp-491, and Asp-493.

It belongs to the RNA polymerase beta' chain family. RpoC1 subfamily. As to quaternary structure, in plastids the minimal PEP RNA polymerase catalytic core is composed of four subunits: alpha, beta, beta', and beta''. When a (nuclear-encoded) sigma factor is associated with the core the holoenzyme is formed, which can initiate transcription. It depends on Mg(2+) as a cofactor. The cofactor is Zn(2+).

It is found in the plastid. The protein localises to the chloroplast. The enzyme catalyses RNA(n) + a ribonucleoside 5'-triphosphate = RNA(n+1) + diphosphate. DNA-dependent RNA polymerase catalyzes the transcription of DNA into RNA using the four ribonucleoside triphosphates as substrates. The protein is DNA-directed RNA polymerase subunit beta' of Phalaenopsis aphrodite subsp. formosana (Moth orchid).